A 400-amino-acid chain; its full sequence is Nicotinate phosphoribosyltransferase (400 aa).

A Phosphohistidine; by autocatalysis modification is found at H220.

Belongs to the NAPRTase family. Transiently phosphorylated on a His residue during the reaction cycle. Phosphorylation strongly increases the affinity for substrates and increases the rate of nicotinate D-ribonucleotide production. Dephosphorylation regenerates the low-affinity form of the enzyme, leading to product release.

It catalyses the reaction nicotinate + 5-phospho-alpha-D-ribose 1-diphosphate + ATP + H2O = nicotinate beta-D-ribonucleotide + ADP + phosphate + diphosphate. It participates in cofactor biosynthesis; NAD(+) biosynthesis; nicotinate D-ribonucleotide from nicotinate: step 1/1. In terms of biological role, catalyzes the synthesis of beta-nicotinate D-ribonucleotide from nicotinate and 5-phospho-D-ribose 1-phosphate at the expense of ATP. This chain is Nicotinate phosphoribosyltransferase, found in Citrobacter koseri (strain ATCC BAA-895 / CDC 4225-83 / SGSC4696).